Consider the following 709-residue polypeptide: Threonine--tRNA ligase, mitochondrial 1 (709 aa).

Residues M1–P21 constitute a mitochondrion transit peptide. Residues D73–K135 form the TGS domain. Zn(2+) is bound by residues C407, H458, and H584.

It belongs to the class-II aminoacyl-tRNA synthetase family.

It localises to the mitochondrion. The protein localises to the cytoplasm. Its subcellular location is the cytosol. It carries out the reaction tRNA(Thr) + L-threonine + ATP = L-threonyl-tRNA(Thr) + AMP + diphosphate + H(+). This is Threonine--tRNA ligase, mitochondrial 1 from Arabidopsis thaliana (Mouse-ear cress).